Consider the following 163-residue polypeptide: MKGSLSHELEVSLPADQLWQVYSTLRLAQLSAELLPTVISKVEVEEGDGGVGTLLRVTYALGIPGMKYHKERFVKIDHEKRLKEALFVEGGHLDLGFSSYLIRLEILEKGHNSSVIKSTVEYEVDEEHAANASFATTDPFMIIGGAVSEHLLQKKSNCSIMLL.

Residue 68 to 71 coordinates tyramine; it reads YHKE. Lys83 serves as the catalytic Proton donor.

The protein belongs to the BetVI family. As to expression, mostly expressed in bulbs, and, to a lower extent, in roots, stems, leaves and flowers.

It catalyses the reaction 3,4-dihydroxybenzaldehyde + tyramine + AH2 = norbelladine + A + H2O. The protein operates within alkaloid biosynthesis. Functionally, catalyzes the condensation of tyramine and 3,4-dihydroxybenzaldehyde (3,4-DHBA) to form norbelladine, the common precursor to all Amaryllidaceae alkaloids such as galanthamine, lycorine and haemanthamine, and including haemanthamine- and crinamine-type alkaloids, promising anticancer agents. The chain is Norbelladine synthase from Narcissus pseudonarcissus (Daffodil).